We begin with the raw amino-acid sequence, 1178 residues long: DNA-directed RNA polymerase subunit beta' (1178 aa).

Zn(2+) is bound by residues Cys-60, Cys-62, Cys-75, and Cys-78. Mg(2+) contacts are provided by Asp-450, Asp-452, and Asp-454. Zn(2+)-binding residues include Cys-795, Cys-869, Cys-876, and Cys-879.

It belongs to the RNA polymerase beta' chain family. In terms of assembly, the RNAP catalytic core consists of 2 alpha, 1 beta, 1 beta' and 1 omega subunit. When a sigma factor is associated with the core the holoenzyme is formed, which can initiate transcription. Mg(2+) serves as cofactor. Requires Zn(2+) as cofactor.

The enzyme catalyses RNA(n) + a ribonucleoside 5'-triphosphate = RNA(n+1) + diphosphate. DNA-dependent RNA polymerase catalyzes the transcription of DNA into RNA using the four ribonucleoside triphosphates as substrates. This Clostridium beijerinckii (strain ATCC 51743 / NCIMB 8052) (Clostridium acetobutylicum) protein is DNA-directed RNA polymerase subunit beta'.